A 336-amino-acid polypeptide reads, in one-letter code: tRNA N6-adenosine threonylcarbamoyltransferase (336 aa).

2 residues coordinate Fe cation: histidine 115 and histidine 119. Substrate contacts are provided by residues 137–141, aspartate 170, glycine 183, aspartate 187, and asparagine 276; that span reads LVSGG. Aspartate 302 lines the Fe cation pocket.

It belongs to the KAE1 / TsaD family. It depends on Fe(2+) as a cofactor.

It is found in the cytoplasm. It catalyses the reaction L-threonylcarbamoyladenylate + adenosine(37) in tRNA = N(6)-L-threonylcarbamoyladenosine(37) in tRNA + AMP + H(+). In terms of biological role, required for the formation of a threonylcarbamoyl group on adenosine at position 37 (t(6)A37) in tRNAs that read codons beginning with adenine. Is involved in the transfer of the threonylcarbamoyl moiety of threonylcarbamoyl-AMP (TC-AMP) to the N6 group of A37, together with TsaE and TsaB. TsaD likely plays a direct catalytic role in this reaction. This Streptococcus suis (strain 98HAH33) protein is tRNA N6-adenosine threonylcarbamoyltransferase.